The primary structure comprises 161 residues: Large ribosomal subunit protein uL15 (161 aa).

The interval 1–47 is disordered; that stretch reads MKLHELHDNPGANRKKKRVARGPGSGKGKTAGRGIKGQTSRSGVALN. Over residues 23–35 the composition is skewed to gly residues; that stretch reads PGSGKGKTAGRGI.

Belongs to the universal ribosomal protein uL15 family. Part of the 50S ribosomal subunit.

Functionally, binds to the 23S rRNA. The polypeptide is Large ribosomal subunit protein uL15 (Paracoccus denitrificans (strain Pd 1222)).